The primary structure comprises 1512 residues: DNA (cytosine-5)-methyltransferase 2 (1512 aa).

Positions 1 to 22 (METKVGKQKKRSVDSNDDVSKE) are enriched in basic and acidic residues. Disordered regions lie at residues 1 to 35 (METKVGKQKKRSVDSNDDVSKERRPKRAAACRNFK) and 634 to 678 (AIHE…GNSE). Positions 638–662 (VEEEEIEEDEEEDENEEDDIEEEAV) are enriched in acidic residues. 2 consecutive BAH domains span residues 707 to 841 (ETVA…FSLP) and 909 to 1026 (TTLK…KQFP). The SAM-dependent MTase C5-type domain maps to 1071 to 1505 (LATLDIFAGC…RKLKEALYLK (435 aa)). The active site involves cysteine 1176.

The protein belongs to the class I-like SAM-binding methyltransferase superfamily. C5-methyltransferase family. Expressed at low levels in vegetative and floral organs.

The protein localises to the nucleus. The catalysed reaction is a 2'-deoxycytidine in DNA + S-adenosyl-L-methionine = a 5-methyl-2'-deoxycytidine in DNA + S-adenosyl-L-homocysteine + H(+). In terms of biological role, maintains chromatin CpG methylation that plays a role in genomic imprinting, regulation of embryogenesis and seed viability. Required for proper patterns of CG DNA methylation in dividing cells. The sequence is that of DNA (cytosine-5)-methyltransferase 2 (MET2) from Arabidopsis thaliana (Mouse-ear cress).